Here is a 541-residue protein sequence, read N- to C-terminus: Carotenoid 9,10(9',10')-cleavage dioxygenase 1 (541 aa).

The Fe cation site is built by H222, H270, H336, and H526.

The protein belongs to the carotenoid oxygenase family. Fe(2+) is required as a cofactor.

It catalyses the reaction all-trans-zeaxanthin + 2 O2 = 4,9-dimethyldodeca-2,4,6,8,10-pentaenedial + 2 (3R)-hydroxy-beta-ionone. In terms of biological role, cleaves a variety of carotenoids at the 9-10 and 9'-10' double bonds. Probably not involved in abscisic acid biosynthesis. In Pisum sativum (Garden pea), this protein is Carotenoid 9,10(9',10')-cleavage dioxygenase 1 (CCD1).